The chain runs to 264 residues: Somatomedin-B and thrombospondin type-1 domain-containing protein (264 aa).

A signal peptide spans 1–20 (MRTLWMALCVLARLWPGALA). The 52-residue stretch at 24–75 (DAGRCCPGRDPACFASGWRQDRVYGTCFCDQACRLTGDCCFDYARACPARPC) folds into the SMB domain. 7 disulfide bridges follow: Cys-28–Cys-36, Cys-28–Cys-52, Cys-36–Cys-70, Cys-50–Cys-52, Cys-50–Cys-63, Cys-56–Cys-62, and Cys-63–Cys-70. One can recognise a TSP type-1 domain in the interval 74–127 (PCIVGEWSPWSGCASQCRPTARVRRRAVQQEPQNGGEPCPALEERAGCLEYATP). Asn-227 carries N-linked (GlcNAc...) asparagine glycosylation.

Belongs to the thrombospondin family.

The protein localises to the secreted. It localises to the extracellular space. It is found in the extracellular matrix. The sequence is that of Somatomedin-B and thrombospondin type-1 domain-containing protein (SBSPON) from Bos taurus (Bovine).